Consider the following 338-residue polypeptide: tRNA N6-adenosine threonylcarbamoyltransferase (338 aa).

Fe cation-binding residues include His-111 and His-115. Substrate-binding positions include 134-138 (LVSGG), Asp-167, Gly-180, and Asn-272. Asp-300 is a binding site for Fe cation.

The protein belongs to the KAE1 / TsaD family. Fe(2+) is required as a cofactor.

It localises to the cytoplasm. It catalyses the reaction L-threonylcarbamoyladenylate + adenosine(37) in tRNA = N(6)-L-threonylcarbamoyladenosine(37) in tRNA + AMP + H(+). In terms of biological role, required for the formation of a threonylcarbamoyl group on adenosine at position 37 (t(6)A37) in tRNAs that read codons beginning with adenine. Is involved in the transfer of the threonylcarbamoyl moiety of threonylcarbamoyl-AMP (TC-AMP) to the N6 group of A37, together with TsaE and TsaB. TsaD likely plays a direct catalytic role in this reaction. The polypeptide is tRNA N6-adenosine threonylcarbamoyltransferase (Shewanella pealeana (strain ATCC 700345 / ANG-SQ1)).